The following is a 251-amino-acid chain: Cell division protein ZapD (251 aa).

Belongs to the ZapD family. Interacts with FtsZ.

The protein localises to the cytoplasm. Cell division factor that enhances FtsZ-ring assembly. Directly interacts with FtsZ and promotes bundling of FtsZ protofilaments, with a reduction in FtsZ GTPase activity. The sequence is that of Cell division protein ZapD from Burkholderia thailandensis (strain ATCC 700388 / DSM 13276 / CCUG 48851 / CIP 106301 / E264).